The primary structure comprises 327 residues: MHPQQLVVSWFSLVLLASPIVAIWELEKNVYIVELDWYPDAPGETVVLTCDTPEEDGITWTSDQSSEVLGSGKTLTIQVKEFGDAGQYTCHKGGEALSRSLLLLHKKEDGIWSTDILKDQKEPKAKSFLKCEAKDYSGHFTCWWLTAISTDLKFSVKSSRGSADPRGVTCGAASLSAEKVSVDHREYNKYTVECQEGSTCPAAEESLLIEVVVEAVHKLKYENYTSSFFIRDIIKPDPPKNLQLKPLKNSRQVEVSWEYPDTWSTPHSYFSLTFCVQVQGKNKREKKLFMDQTSAKVTCHKDANVRVQARDRYYSSFWSEWASVSCS.

A signal peptide spans 1–22 (MHPQQLVVSWFSLVLLASPIVA). The 84-residue stretch at 23 to 106 (IWELEKNVYI…LSRSLLLLHK (84 aa)) folds into the Ig-like C2-type domain. Cysteine 50 and cysteine 90 form a disulfide bridge. The N-linked (GlcNAc...) asparagine glycan is linked to asparagine 223. A Fibronectin type-III domain is found at 238–327 (PPKNLQLKPL…WSEWASVSCS (90 aa)).

Belongs to the IL-12B family. Heterodimer with IL12A; disulfide-linked. The heterodimer is known as interleukin IL-12. Heterodimer with IL23A; disulfide-linked. The heterodimer is known as interleukin IL-23. Also secreted as a monomer. Interacts with NBR1; this interaction promotes IL-12 secretion.

In terms of biological role, cytokine that can act as a growth factor for activated T and NK cells, enhance the lytic activity of NK/lymphokine-activated killer cells, and stimulate the production of IFN-gamma by resting PBMC. Its function is as follows. Associates with IL23A to form the IL-23 interleukin, a heterodimeric cytokine which functions in innate and adaptive immunity. IL-23 may constitute with IL-17 an acute response to infection in peripheral tissues. IL-23 binds to a heterodimeric receptor complex composed of IL12RB1 and IL23R, activates the Jak-Stat signaling cascade, stimulates memory rather than naive T-cells and promotes production of pro-inflammatory cytokines. IL-23 induces autoimmune inflammation and thus may be responsible for autoimmune inflammatory diseases and may be important for tumorigenesis. This Bubalus bubalis (Domestic water buffalo) protein is Interleukin-12 subunit beta (IL12B).